The primary structure comprises 355 residues: MAAMATTASSLLKTSFAGARLPAAARNPTVSVAPRTGGAICNSISSSSSTPPYDLNAIRFSPIKESIVSREMTRRYMTDMITYADTDVVVVGAGSAGLSCAYELSKDPSVSVAVIEQSVSPGGGAWLGGQLFSAMVVRKPAHLFLDELGVAYDEQEDYVVIKHAALFTSTVMSRLLARPNVKLFNAVAVEDLIVKEGRVGGVVTNWALVSMNHDTQSCMDPNVMESRVVVSSCGHDGPFGATGVKRLQDIGMIDAVPGMRALDMNTAEDEIVRLTREVVPGMIVTGMEVAEIDGAPRMGPTFGAMMISGQKAAHLALKALGRPNAIDGTIKKAAAAAAHPELILASKDDGEIVDA.

The transit peptide at 1–42 (MAAMATTASSLLKTSFAGARLPAAARNPTVSVAPRTGGAICN) directs the protein to the chloroplast. Substrate is bound by residues alanine 96, 116-117 (EQ), glycine 124, and valine 189. Cysteine 218 is subject to 2,3-didehydroalanine (Cys). Substrate-binding positions include aspartate 220, histidine 235, methionine 287, and 297–299 (RMG).

This sequence belongs to the THI4 family. In terms of assembly, homooctamer. Fe cation is required as a cofactor. Post-translationally, during the catalytic reaction, a sulfide is transferred from Cys-218 to a reaction intermediate, generating a dehydroalanine residue.

The protein localises to the plastid. The protein resides in the chloroplast. It catalyses the reaction [ADP-thiazole synthase]-L-cysteine + glycine + NAD(+) = [ADP-thiazole synthase]-dehydroalanine + ADP-5-ethyl-4-methylthiazole-2-carboxylate + nicotinamide + 3 H2O + 2 H(+). Its function is as follows. Involved in biosynthesis of the thiamine precursor thiazole. Catalyzes the conversion of NAD and glycine to adenosine diphosphate 5-(2-hydroxyethyl)-4-methylthiazole-2-carboxylic acid (ADT), an adenylated thiazole intermediate. The reaction includes an iron-dependent sulfide transfer from a conserved cysteine residue of the protein to a thiazole intermediate. The enzyme can only undergo a single turnover, which suggests it is a suicide enzyme. May have additional roles in adaptation to various stress conditions and in DNA damage tolerance. Required fot thiamine accumulation and disease resistance toward the bacterial pathogen Xanthomonas oryzae pv oryzae (Xoo) and the fungal pathogen Magnaporthe oryzae. During infection by Xoo, functions positively in the defense pathway initiated by the resistance genes XA3 and XA26 by promoting thiamine synthesis. May function upstream of the defense-related proteins peroxidases, phenylalanine ammonia-lyases and pathogenesis-related proteins. In terms of biological role, (Microbial infection) During infection by Xanthomonas oryzae pv oryzae (Xoo), THI1 interacts with the type III effector virulence factor xadA from Xoo, which is an adhesin-like outer membrane protein. This probably attenuates the function of THI1 in defense response. The protein is Thiamine thiazole synthase, chloroplastic of Oryza sativa subsp. japonica (Rice).